The sequence spans 207 residues: N-(5'-phosphoribosyl)anthranilate isomerase (207 aa).

This sequence belongs to the TrpF family.

The enzyme catalyses N-(5-phospho-beta-D-ribosyl)anthranilate = 1-(2-carboxyphenylamino)-1-deoxy-D-ribulose 5-phosphate. It functions in the pathway amino-acid biosynthesis; L-tryptophan biosynthesis; L-tryptophan from chorismate: step 3/5. This is N-(5'-phosphoribosyl)anthranilate isomerase from Legionella pneumophila (strain Corby).